We begin with the raw amino-acid sequence, 664 residues long: Transketolase 1 (664 aa).

His-26 lines the substrate pocket. Thiamine diphosphate contacts are provided by residues His-66 and Gly-114–Leu-116. Asp-155 lines the Mg(2+) pocket. Positions 156 and 185 each coordinate thiamine diphosphate. Asn-185 and Ile-187 together coordinate Mg(2+). 3 residues coordinate substrate: His-260, Arg-357, and Ser-384. Position 260 (His-260) interacts with thiamine diphosphate. The active-site Proton donor is the Glu-411. Phe-437 lines the thiamine diphosphate pocket. Substrate contacts are provided by His-461, Asp-469, and Arg-520.

Belongs to the transketolase family. Homodimer. Requires Mg(2+) as cofactor. The cofactor is Ca(2+). Mn(2+) is required as a cofactor. It depends on Co(2+) as a cofactor. Thiamine diphosphate serves as cofactor.

The enzyme catalyses D-sedoheptulose 7-phosphate + D-glyceraldehyde 3-phosphate = aldehydo-D-ribose 5-phosphate + D-xylulose 5-phosphate. Its function is as follows. Catalyzes the transfer of a two-carbon ketol group from a ketose donor to an aldose acceptor, via a covalent intermediate with the cofactor thiamine pyrophosphate. The chain is Transketolase 1 (tkt1) from Aliivibrio fischeri (strain ATCC 700601 / ES114) (Vibrio fischeri).